The chain runs to 172 residues: Photosystem I assembly protein Ycf3 (172 aa).

TPR repeat units follow at residues 35–70 (AFTY…EIDP), 74–107 (SYIL…NPFL), and 122–155 (GERA…TPGN).

Belongs to the Ycf3 family.

The protein localises to the plastid. It is found in the chloroplast thylakoid membrane. Essential for the assembly of the photosystem I (PSI) complex. May act as a chaperone-like factor to guide the assembly of the PSI subunits. The sequence is that of Photosystem I assembly protein Ycf3 from Dioscorea elephantipes (Elephant's foot yam).